A 587-amino-acid chain; its full sequence is MVTAAMLLQCCPVLARGPTSLLGKVVKTHQFLFGIGRCPILATQGPNCSQIHLKATKAGGDSPSWAKGHCPFMLSELQDGKSKIVQKAAPEVQEDVKAFKTDLPSSLVSVSLRKPFSGPQEQEQISGKVTHLIQNNMPGNYVFSYDQFFRDKIMEKKQDHTYRVFKTVNRWADAYPFAQHFSEASVASKDVSVWCSNDYLGMSRHPQVLQATQETLQRHGAGAGGTRNISGTSKFHVELEQELAELHQKDSALLFSSCFVANDSTLFTLAKILPGCEIYSDAGNHASMIQGIRNSGAAKFVFRHNDPDHLKKLLEKSNPKIPKIVAFETVHSMDGAICPLEELCDVSHQYGALTFVDEVHAVGLYGSRGAGIGERDGIMHKIDIISGTLGKAFGCVGGYIASTRDLVDMVRSYAAGFIFTTSLPPMVLSGALESVRLLKGEEGQALRRAHQRNVKHMRQLLMDRGLPVIPCPSHIIPIRVGNAALNSKLCDLLLSKHGIYVQAINYPTVPRGEELLRLAPSPHHSPQMMEDFVEKLLLAWTAVGLPLQDVSVAACNFCRRPVHFELMSEWERSYFGNMGPQYVTTYA.

The transit peptide at 1 to 49 (MVTAAMLLQCCPVLARGPTSLLGKVVKTHQFLFGIGRCPILATQGPNCS) directs the protein to the mitochondrion. Residue arginine 163 participates in succinyl-CoA binding. Pyridoxal 5'-phosphate contacts are provided by cysteine 258 and phenylalanine 259. Positions 280 and 299 each coordinate succinyl-CoA. Residues serine 332, histidine 360, and threonine 388 each contribute to the pyridoxal 5'-phosphate site. Lysine 391 is an active-site residue. Lysine 391 carries the post-translational modification N6-(pyridoxal phosphate)lysine. Positions 420 and 421 each coordinate pyridoxal 5'-phosphate. Threonine 508 is a binding site for succinyl-CoA.

Belongs to the class-II pyridoxal-phosphate-dependent aminotransferase family. Homodimer. Interacts with SUCLA2. In terms of assembly, interacts with SUCLA2. The cofactor is pyridoxal 5'-phosphate. As to expression, erythroid-specific.

Its subcellular location is the mitochondrion inner membrane. The enzyme catalyses succinyl-CoA + glycine + H(+) = 5-aminolevulinate + CO2 + CoA. The protein operates within porphyrin-containing compound metabolism; protoporphyrin-IX biosynthesis; 5-aminolevulinate from glycine: step 1/1. Its activity is regulated as follows. Down-regulated by itaconyl-CoA which acts as a competitive inhibitor of succinyl-CoA substrate. Catalyzes the pyridoxal 5'-phosphate (PLP)-dependent condensation of succinyl-CoA and glycine to form aminolevulinic acid (ALA), with CoA and CO2 as by-products. Contributes significantly to heme formation during erythropoiesis. In terms of biological role, catalyzes the pyridoxal 5'-phosphate (PLP)-dependent condensation of succinyl-CoA and glycine to form aminolevulinic acid (ALA), with CoA and CO2 as by-products. Catalytic activity is 75-85% of isoform 1 activity. Its function is as follows. Catalyzes the pyridoxal 5'-phosphate (PLP)-dependent condensation of succinyl-CoA and glycine to form aminolevulinic acid (ALA), with CoA and CO2 as by-products. Catalytic activity is 65-75% of isoform 1 activity. The protein is 5-aminolevulinate synthase, erythroid-specific, mitochondrial of Homo sapiens (Human).